Reading from the N-terminus, the 324-residue chain is Nidogen-1 (324 aa).

The 163-residue stretch at 16–178 (PFLADLDTTD…GVWVFEIGSP (163 aa)) folds into the NIDO domain. Asparagine 97 carries an N-linked (GlcNAc...) asparagine glycan. Sulfotyrosine occurs at positions 200 and 205. The segment at 219–259 (TQPFPSHSPRRGYPDPHNVPRTLAPSYEATERPHGIPTERT) is disordered. Basic and acidic residues predominate over residues 247-259 (ATERPHGIPTERT). One can recognise an EGF-like domain in the interval 295 to 324 (SQQTCANNRHQCSVHAECRDYATGFCCRCV). 2 disulfide bridges follow: cysteine 299–cysteine 312 and cysteine 306–cysteine 321.

As to quaternary structure, interacts with FBLN1. Interacts with LGALS3BP. Interacts with PLXDC1. Interacts with SVEP1. N- and O-glycosylated.

The protein resides in the secreted. The protein localises to the extracellular space. It localises to the extracellular matrix. Its subcellular location is the basement membrane. Functionally, sulfated glycoprotein widely distributed in basement membranes and tightly associated with laminin. Also binds to collagen IV and perlecan. It probably has a role in cell-extracellular matrix interactions. This chain is Nidogen-1 (Nid1), found in Rattus norvegicus (Rat).